The chain runs to 175 residues: Gamma-crystallin B (175 aa).

Beta/gamma crystallin 'Greek key' domains follow at residues 2–40 and 41–83; these read GKITFYEDRAFQGRSYECTTDCPNLQPYFSRCNSIRVES and GCWM…CLIP. Positions 84 to 88 are connecting peptide; that stretch reads PHSGA. 2 consecutive Beta/gamma crystallin 'Greek key' domains span residues 89–129 and 130–172; these read YRMK…NVLE and GSWI…RRVM.

It belongs to the beta/gamma-crystallin family. As to quaternary structure, monomer.

In terms of biological role, crystallins are the dominant structural components of the vertebrate eye lens. This Homo sapiens (Human) protein is Gamma-crystallin B (CRYGB).